We begin with the raw amino-acid sequence, 425 residues long: GPI mannosyltransferase 1 (425 aa).

Helical transmembrane passes span 11–31 (VIGA…WQDA), 85–105 (FFAF…WLIA), 144–164 (LLGV…VSLA), 166–186 (VILG…PAVV), 233–253 (IHLT…MYIL), 295–315 (FESL…PLVL), 340–360 (SQYF…SSLM), 367–387 (ILVG…GYNL), and 398–418 (GLFL…GIIV).

The protein belongs to the PIGM family.

Its subcellular location is the endoplasmic reticulum membrane. The protein operates within glycolipid biosynthesis; glycosylphosphatidylinositol-anchor biosynthesis. Functionally, mannosyltransferase involved in glycosylphosphatidylinositol-anchor biosynthesis. Transfers the first alpha-1,4-mannose to GlcN-acyl-PI during GPI precursor assembly. Required for cell wall integrity. In Aspergillus fumigatus (strain ATCC MYA-4609 / CBS 101355 / FGSC A1100 / Af293) (Neosartorya fumigata), this protein is GPI mannosyltransferase 1 (gpi14).